Here is a 178-residue protein sequence, read N- to C-terminus: Hypoxanthine phosphoribosyltransferase (178 aa).

The diphosphate site is built by R43 and G44. E99 is a GMP binding site. Position 99 (E99) interacts with IMP. Mg(2+) is bound by residues E99 and D100. The active-site Proton acceptor is the D103. Residues 103 to 108 (DSGNTL), K131, and D159 each bind GMP. Residues 103-108 (DSGNTL) and K131 each bind IMP. Position 165 (R165) interacts with diphosphate.

This sequence belongs to the purine/pyrimidine phosphoribosyltransferase family. Homotetramer. Requires Mg(2+) as cofactor.

It localises to the cytoplasm. The enzyme catalyses IMP + diphosphate = hypoxanthine + 5-phospho-alpha-D-ribose 1-diphosphate. It carries out the reaction GMP + diphosphate = guanine + 5-phospho-alpha-D-ribose 1-diphosphate. It participates in purine metabolism; IMP biosynthesis via salvage pathway; IMP from hypoxanthine: step 1/1. Functionally, purine salvage pathway enzyme which catalyzes the transfer of the ribosyl-5-phosphate group from 5-phospho-alpha-D-ribose 1-diphosphate (PRPP) to the N9 position of hypoxanthine to yield IMP (inosine 5'-monophosphate). To a lesser extent, can also act on guanine leading to GMP, but shows a highly less efficient activity with xanthine. This is Hypoxanthine phosphoribosyltransferase (hpt) from Salmonella typhimurium (strain LT2 / SGSC1412 / ATCC 700720).